The chain runs to 68 residues: Protein transport protein Sec61 gamma-1 subunit (68 aa).

Residues 1–32 (MDKVVKFAEPGRAFAKDSIRLVKRCTKPDRKE) are Cytoplasmic-facing. A helical transmembrane segment spans residues 33-61 (FQKIAIATAVGFAIMGFIGFFVKLIHIPI). The Extracellular portion of the chain corresponds to 62–68 (NNIIVGS).

This sequence belongs to the SecE/SEC61-gamma family. As to quaternary structure, heterotrimeric complex composed of SEC61-alpha, SEC61-beta and SEC61-gamma.

The protein localises to the endoplasmic reticulum membrane. In terms of biological role, necessary for protein translocation in the endoplasmic reticulum. This is Protein transport protein Sec61 gamma-1 subunit (SEC61G1) from Drosophila melanogaster (Fruit fly).